The following is a 1037-amino-acid chain: Ribonuclease E (1037 aa).

3 disordered regions span residues 1–23 (MAED…LPER), 47–90 (FDGR…ETPV), and 106–369 (VSEA…PILS). Over residues 47 to 67 (FDGRQRSAHSTVDKADAERVR) the composition is skewed to basic and acidic residues. 2 stretches are compositionally biased toward low complexity: residues 68–90 (AALT…ETPV) and 106–126 (VSEA…PAAE). 2 stretches are compositionally biased toward acidic residues: residues 127–141 (AEAE…EAET) and 196–226 (VVDD…DDDQ). The segment covering 230–242 (PRRRRRGRRGRGR) has biased composition (basic residues). Residues 248–284 (NDDATSDADTDSTEDQTDGDEQESGEDSDDSGDEDST) are compositionally biased toward acidic residues. Positions 291 to 301 (RRRRRRRRRKS) are enriched in basic residues. A compositionally biased stretch (basic and acidic residues) spans 320–335 (VHERAPRTERSDKSDD). One can recognise an S1 motif domain in the interval 427 to 504 (GNIYLGIVQN…GHKGARLTTQ (78 aa)). Residues 561-589 (EDIRSDVERLQKRWSEIEAKAAEVTEKKA) adopt a coiled-coil conformation. The Mg(2+) site is built by aspartate 694 and aspartate 738. Cysteine 796 and cysteine 799 together coordinate Zn(2+). A disordered region spans residues 810 to 1037 (PIDSASSNGG…ARPAGPPSHD (228 aa)). A compositionally biased stretch (basic residues) spans 834–843 (RRGKRGKKGA). The segment covering 844-864 (ARTEEVHVAKVPDHTPGEHPM) has biased composition (basic and acidic residues). A compositionally biased stretch (acidic residues) spans 879–891 (EDHEDHEDHETAE). The span at 897-913 (EVRDDTRDEHDADERAH) shows a compositional bias: basic and acidic residues. Positions 923–1006 (GDEDLDDSDE…DSDSDEDEEP (84 aa)) are enriched in acidic residues.

This sequence belongs to the RNase E/G family. In terms of assembly, assembles into a homotetramer formed by a dimer of dimers. Interacts with DNA-binding protein HhupB. Mg(2+) is required as a cofactor. Zn(2+) serves as cofactor.

Its subcellular location is the cytoplasm. It carries out the reaction Endonucleolytic cleavage of single-stranded RNA in A- and U-rich regions.. In terms of biological role, endoribonuclease that plays a central role in RNA processing and decay. Plays a major role in pre-16S rRNA maturation, probably generating the mature 5'-end, and a minor role in pre-5S and pre-23S rRNA maturation. Probably also processes tRNA. RNase E and HupB jointly contribute to cellular adaptation to changing growth conditions and survival during antibiotic treatment. Overexpression or depletion leads to changes in gene expression; overexpression induces metabolic slowdown and cell stress while depleted strains grow less well than induced strains. In Mycolicibacterium smegmatis (strain ATCC 700084 / mc(2)155) (Mycobacterium smegmatis), this protein is Ribonuclease E (rne).